The primary structure comprises 241 residues: Carboxysome assembly protein CcmN (241 aa).

Residues 123–206 (GASSPTTDSV…PTAPTVVTTA (84 aa)) form a disordered region. Residues 185 to 195 (QISSNRSPGES) show a composition bias toward polar residues. Low complexity predominate over residues 196–206 (TPTAPTVVTTA). Positions 219 to 241 (VVGQVYINQLLLTLFPERRYFSS) match the Encapsulation peptide motif.

The protein belongs to the CcmN family. As to quaternary structure, interacts with full-length and the N-terminal 249 residues of CcmM; a probable CcmM-CcaA-CcmN complex can also be isolated. Interacts with CcmK.

The protein localises to the carboxysome. Required for carboxysome formation; the N-terminus interacts with CcmM which itself binds RuBisCO (ribulose bisphosphate carboxylase, rbcL-rbcS). May also contact shell protein CcmK to help assemble the carboxysome. In terms of biological role, beta-carboxysome assembly initiates when soluble RuBisCO is condensed into a liquid matrix in a pre-carboxysome by the RbcS-like domains of probably both forms of CcmM. CcmN interacts with the N-terminus of full-length CcmM, and then recruits the CcmK major shell protein via CcmN's encapsulation peptide. Shell formation requires CcmK proteins and CcmO. CcmL caps the otherwise elongated carboxysome. Once fully encapsulated carboxysomes are formed, they migrate within the cell probably via interactions with the cytoskeleton. The sequence is that of Carboxysome assembly protein CcmN from Synechocystis sp. (strain ATCC 27184 / PCC 6803 / Kazusa).